Reading from the N-terminus, the 330-residue chain is Interleukin-12 subunit beta (330 aa).

Positions 1 to 22 (MHPQQLVVSWFSLVLLASPIMA) are cleaved as a signal peptide. Residues 23–106 (IWELEKNVYV…LSHSLLLLHK (84 aa)) enclose the Ig-like C2-type domain. An intrachain disulfide couples C50 to C90. N-linked (GlcNAc...) asparagine glycans are attached at residues N136 and N224. Positions 239–330 (PPKNLQLKPL…WSEWASVSCS (92 aa)) constitute a Fibronectin type-III domain.

This sequence belongs to the IL-12B family. As to quaternary structure, heterodimer with IL12A; disulfide-linked. The heterodimer is known as interleukin IL-12. Heterodimer with IL23A; disulfide-linked. The heterodimer is known as interleukin IL-23. Also secreted as a monomer. Interacts with NBR1; this interaction promotes IL-12 secretion.

The protein localises to the secreted. In terms of biological role, cytokine that can act as a growth factor for activated T and NK cells, enhance the lytic activity of NK/lymphokine-activated killer cells, and stimulate the production of IFN-gamma by resting PBMC. Functionally, associates with IL23A to form the IL-23 interleukin, a heterodimeric cytokine which functions in innate and adaptive immunity. IL-23 may constitute with IL-17 an acute response to infection in peripheral tissues. IL-23 binds to a heterodimeric receptor complex composed of IL12RB1 and IL23R, activates the Jak-Stat signaling cascade, stimulates memory rather than naive T-cells and promotes production of pro-inflammatory cytokines. IL-23 induces autoimmune inflammation and thus may be responsible for autoimmune inflammatory diseases and may be important for tumorigenesis. This Lama glama (Llama) protein is Interleukin-12 subunit beta (IL12B).